A 158-amino-acid polypeptide reads, in one-letter code: Cyclic pyranopterin monophosphate synthase (158 aa).

Residues 75–77 (LCH) and 113–114 (ME) contribute to the substrate site. Residue D128 is part of the active site.

Belongs to the MoaC family. As to quaternary structure, homohexamer; trimer of dimers.

It catalyses the reaction (8S)-3',8-cyclo-7,8-dihydroguanosine 5'-triphosphate = cyclic pyranopterin phosphate + diphosphate. Its pathway is cofactor biosynthesis; molybdopterin biosynthesis. Functionally, catalyzes the conversion of (8S)-3',8-cyclo-7,8-dihydroguanosine 5'-triphosphate to cyclic pyranopterin monophosphate (cPMP). The sequence is that of Cyclic pyranopterin monophosphate synthase from Ralstonia pickettii (strain 12J).